A 519-amino-acid polypeptide reads, in one-letter code: 3-octaprenyl-4-hydroxybenzoate carboxy-lyase (519 aa).

Asn-177 contributes to the Mn(2+) binding site. Residues 180-182 (IYR), 194-196 (RWL), and 199-200 (RG) contribute to the prenylated FMN site. Glu-243 contacts Mn(2+). Asp-318 serves as the catalytic Proton donor.

The protein belongs to the UbiD family. As to quaternary structure, homohexamer. Prenylated FMN is required as a cofactor. Requires Mn(2+) as cofactor.

It localises to the cell membrane. It carries out the reaction a 4-hydroxy-3-(all-trans-polyprenyl)benzoate + H(+) = a 2-(all-trans-polyprenyl)phenol + CO2. Its pathway is cofactor biosynthesis; ubiquinone biosynthesis. Functionally, catalyzes the decarboxylation of 3-octaprenyl-4-hydroxy benzoate to 2-octaprenylphenol, an intermediate step in ubiquinone biosynthesis. The sequence is that of 3-octaprenyl-4-hydroxybenzoate carboxy-lyase from Burkholderia pseudomallei (strain 1710b).